The following is a 229-amino-acid chain: 2,3-bisphosphoglycerate-dependent phosphoglycerate mutase (229 aa).

Substrate-binding positions include 8 to 15 (RHGESAWN), 21 to 22 (TG), arginine 60, 87 to 90 (ERHY), lysine 98, 114 to 115 (RR), and 183 to 184 (GN). Residue histidine 9 is the Tele-phosphohistidine intermediate of the active site. The active-site Proton donor/acceptor is glutamate 87.

It belongs to the phosphoglycerate mutase family. BPG-dependent PGAM subfamily. Homodimer.

The catalysed reaction is (2R)-2-phosphoglycerate = (2R)-3-phosphoglycerate. It participates in carbohydrate degradation; glycolysis; pyruvate from D-glyceraldehyde 3-phosphate: step 3/5. Its function is as follows. Catalyzes the interconversion of 2-phosphoglycerate and 3-phosphoglycerate. In Polynucleobacter necessarius subsp. necessarius (strain STIR1), this protein is 2,3-bisphosphoglycerate-dependent phosphoglycerate mutase.